Reading from the N-terminus, the 150-residue chain is UPF0178 protein Shewmr4_1560 (150 aa).

Belongs to the UPF0178 family.

This is UPF0178 protein Shewmr4_1560 from Shewanella sp. (strain MR-4).